Consider the following 456-residue polypeptide: Solute carrier family 49 member 4 homolog (456 aa).

At 1–29 the chain is on the cytoplasmic side; the sequence is MGLEWSSPGERQPLLFPGGPRSPRVFGRR. The short motif at 14-15 is the Di-leucine motif; mediates lysosomal localization element; the sequence is LL. Residues 30–50 traverse the membrane as a helical segment; sequence WLVLLLFSVLAFLQGLVWNSW. Residues 51–67 lie on the Lumenal side of the membrane; that stretch reads GPIQISARTAYKFSGLD. Residues 68–88 traverse the membrane as a helical segment; the sequence is IALLVLWGPIGFLPCFLFMWL. Topologically, residues 89 to 95 are cytoplasmic; the sequence is MDNRGLR. The helical transmembrane segment at 96 to 116 threads the bilayer; the sequence is ITVLLTALLMVLGAGLRCVPV. Residues 117–123 are Lumenal-facing; sequence EDLAIRR. The helical transmembrane segment at 124-144 threads the bilayer; that stretch reads ILIHGGQLLNGFAGPTVMNAA. Residues 145 to 162 are Cytoplasmic-facing; sequence PFLSTTWFAPDERATATA. A helical transmembrane segment spans residues 163 to 183; the sequence is IASMLNYLGGACAFLVGPLVV. Residues 184 to 207 lie on the Lumenal side of the membrane; sequence PAPNSTSGLLLYSGSTDAIKDRIE. N-linked (GlcNAc...) asparagine glycosylation occurs at asparagine 187. The chain crosses the membrane as a helical span at residues 208–228; that stretch reads AVMYAEFGIIFVVFAAILAYF. Residues 229 to 259 lie on the Cytoplasmic side of the membrane; sequence PARPPVPPSVAAASRRLSYRTSIFRLLSNLR. Residues 260 to 280 traverse the membrane as a helical segment; sequence FLLIVLAYAIPLGFYSGWIGV. Residues 281–292 lie on the Lumenal side of the membrane; it reads LDLILTPVHVTQ. Residues 293–313 form a helical membrane-spanning segment; that stretch reads VDAGWVGFWSIVGGCVVGIAV. Residues 314–326 lie on the Cytoplasmic side of the membrane; it reads GRFADSIRGVLKP. A helical transmembrane segment spans residues 327 to 347; the sequence is ILLLLFSGATLSATWFTLTFL. The Lumenal segment spans residues 348 to 362; sequence SNVTHLPLTTATLYT. A glycan (N-linked (GlcNAc...) asparagine) is linked at asparagine 349. A helical membrane pass occupies residues 363–383; that stretch reads SCILIGVFLNGTVPIFFELFV. Residues 384 to 392 are Cytoplasmic-facing; that stretch reads ETVYPIPEG. The chain crosses the membrane as a helical span at residues 393–413; it reads IACGVVTFLSNIFMGVLLVFL. Residues 414–420 lie on the Lumenal side of the membrane; it reads TMYQMEL. The helical transmembrane segment at 421–441 threads the bilayer; sequence SWLNWCLTGSCFLSLFFIACF. Residues 442-456 lie on the Cytoplasmic side of the membrane; it reads RESYDRLYLDVFVSV.

This sequence belongs to the major facilitator superfamily.

The protein resides in the lysosome membrane. It catalyses the reaction pyridoxine(out) + n H(+)(out) = pyridoxine(in) + n H(+)(in). Functionally, mediates H(+)-dependent pyridoxine transport. The protein is Solute carrier family 49 member 4 homolog (slc49a4) of Xenopus laevis (African clawed frog).